Consider the following 287-residue polypeptide: AA9 family lytic polysaccharide monooxygenase C (287 aa).

A signal peptide spans 1–16 (MKSVLVALATATAVSA). Residue H17 coordinates Cu(2+). N22 carries an N-linked (GlcNAc...) asparagine glycan. Intrachain disulfides connect C77–C230 and C200–C284. H114 is a binding site for Cu(2+). Residues H216 and Q225 each coordinate O2. Y227 serves as a coordination point for Cu(2+).

Belongs to the polysaccharide monooxygenase AA9 family. Cu(2+) is required as a cofactor.

The protein resides in the secreted. It catalyses the reaction [(1-&gt;4)-beta-D-glucosyl]n+m + reduced acceptor + O2 = 4-dehydro-beta-D-glucosyl-[(1-&gt;4)-beta-D-glucosyl]n-1 + [(1-&gt;4)-beta-D-glucosyl]m + acceptor + H2O.. In terms of biological role, lytic polysaccharide monooxygenase (LPMO) that depolymerizes crystalline and amorphous polysaccharides via the oxidation of scissile alpha- or beta-(1-4)-glycosidic bonds, yielding C1 or C4 oxidation products. Catalysis by LPMOs requires the reduction of the active-site copper from Cu(II) to Cu(I) by a reducing agent and H(2)O(2) or O(2) as a cosubstrate. The chain is AA9 family lytic polysaccharide monooxygenase C from Podospora anserina (strain S / ATCC MYA-4624 / DSM 980 / FGSC 10383) (Pleurage anserina).